The chain runs to 699 residues: DNA ligase (699 aa).

Positions 1-29 (MSDADVDAESNPYLRDPPTEFEPAESLSR) are disordered. Residues 60–64 (DAAYD), 108–109 (SI), and E137 contribute to the NAD(+) site. Residue K139 is the N6-AMP-lysine intermediate of the active site. Residues R160, E196, K311, and K335 each contribute to the NAD(+) site. Residues C425, C428, C441, and C447 each coordinate Zn(2+). In terms of domain architecture, BRCT spans 613–666 (SGGDELDGLTFVVTGTLAASRSDVTELVESHGGNVTGSVSGNTDYLVVGENPGR).

This sequence belongs to the NAD-dependent DNA ligase family. LigA subfamily. Mg(2+) is required as a cofactor. Mn(2+) serves as cofactor.

It carries out the reaction NAD(+) + (deoxyribonucleotide)n-3'-hydroxyl + 5'-phospho-(deoxyribonucleotide)m = (deoxyribonucleotide)n+m + AMP + beta-nicotinamide D-nucleotide.. Displays maximal in vitro activity at high salt levels. In terms of biological role, DNA ligase that catalyzes the formation of phosphodiester linkages between 5'-phosphoryl and 3'-hydroxyl groups in double-stranded DNA using NAD as a coenzyme and as the energy source for the reaction. It is essential for DNA replication and repair of damaged DNA. This is DNA ligase from Haloferax volcanii (strain ATCC 29605 / DSM 3757 / JCM 8879 / NBRC 14742 / NCIMB 2012 / VKM B-1768 / DS2) (Halobacterium volcanii).